The following is a 282-amino-acid chain: Homeobox protein vex1 (282 aa).

The homeobox DNA-binding region spans 129–188; sequence ASRARTKFTAEQLEELEKSFKENRYIGSSEKRRLSKVLKLSENQIKTWFQNRRMKFKRQT.

The protein resides in the nucleus. Functionally, transcriptional repressor. Acts in a ventral signaling pathway downstream of bmp4 to antagonize the Spemann organizer and ventrally pattern the embryonic mesoderm. Represses transcription of the dorsal genes gsc and otx2. This Xenopus tropicalis (Western clawed frog) protein is Homeobox protein vex1.